A 25-amino-acid polypeptide reads, in one-letter code: Growth-blocking peptide (25 aa).

An intrachain disulfide couples Cys-7 to Cys-19. At Gln-25 the chain carries Glutamine amide.

Belongs to the GBP/PSP1/paralytic peptide family. In terms of tissue distribution, hemolymph.

Functionally, biogenic peptide that prevents, in lepidopteran, the onset of metamorphosis from larva to pupa. This growth-blocking peptide has repressive activity against juvenile hormone esterase. This chain is Growth-blocking peptide, found in Cotesia kariyai (Parasitic wasp).